The following is a 471-amino-acid chain: Siroheme synthase 1 (471 aa).

Residues 1 to 203 (MDYLPLFAEL…GNSAEAEKAL (203 aa)) are precorrin-2 dehydrogenase /sirohydrochlorin ferrochelatase. Residues 22 to 23 (EI) and 43 to 44 (ET) contribute to the NAD(+) site. Ser128 is subject to Phosphoserine. A uroporphyrinogen-III C-methyltransferase region spans residues 215-471 (GEIILVGAGP…GFNASVVNLA (257 aa)). S-adenosyl-L-methionine is bound at residue Pro224. Asp247 acts as the Proton acceptor in catalysis. The Proton donor role is filled by Lys269. S-adenosyl-L-methionine is bound by residues 300–302 (GGD), Ile305, 330–331 (TA), Met382, and Gly411.

The protein in the N-terminal section; belongs to the precorrin-2 dehydrogenase / sirohydrochlorin ferrochelatase family. In the C-terminal section; belongs to the precorrin methyltransferase family.

The enzyme catalyses uroporphyrinogen III + 2 S-adenosyl-L-methionine = precorrin-2 + 2 S-adenosyl-L-homocysteine + H(+). It catalyses the reaction precorrin-2 + NAD(+) = sirohydrochlorin + NADH + 2 H(+). The catalysed reaction is siroheme + 2 H(+) = sirohydrochlorin + Fe(2+). Its pathway is cofactor biosynthesis; adenosylcobalamin biosynthesis; precorrin-2 from uroporphyrinogen III: step 1/1. It participates in cofactor biosynthesis; adenosylcobalamin biosynthesis; sirohydrochlorin from precorrin-2: step 1/1. It functions in the pathway porphyrin-containing compound metabolism; siroheme biosynthesis; precorrin-2 from uroporphyrinogen III: step 1/1. The protein operates within porphyrin-containing compound metabolism; siroheme biosynthesis; siroheme from sirohydrochlorin: step 1/1. Its pathway is porphyrin-containing compound metabolism; siroheme biosynthesis; sirohydrochlorin from precorrin-2: step 1/1. In terms of biological role, multifunctional enzyme that catalyzes the SAM-dependent methylations of uroporphyrinogen III at position C-2 and C-7 to form precorrin-2 via precorrin-1. Then it catalyzes the NAD-dependent ring dehydrogenation of precorrin-2 to yield sirohydrochlorin. Finally, it catalyzes the ferrochelation of sirohydrochlorin to yield siroheme. This Klebsiella pneumoniae subsp. pneumoniae (strain ATCC 700721 / MGH 78578) protein is Siroheme synthase 1.